The sequence spans 442 residues: Trigger factor (442 aa).

The PPIase FKBP-type domain maps to 162-247 (GDQVTIDAIG…IKAVHTSEPT (86 aa)).

The protein belongs to the FKBP-type PPIase family. Tig subfamily.

The protein resides in the cytoplasm. The catalysed reaction is [protein]-peptidylproline (omega=180) = [protein]-peptidylproline (omega=0). Its function is as follows. Involved in protein export. Acts as a chaperone by maintaining the newly synthesized protein in an open conformation. Functions as a peptidyl-prolyl cis-trans isomerase. The chain is Trigger factor from Rickettsia canadensis (strain McKiel).